Consider the following 125-residue polypeptide: Small ribosomal subunit protein uS13 (125 aa).

Residues 93–125 (RSLPVRGQRTRTNARTRKGKRKTVAGKKKAGKK) are disordered.

It belongs to the universal ribosomal protein uS13 family. As to quaternary structure, part of the 30S ribosomal subunit. Forms a loose heterodimer with protein S19. Forms two bridges to the 50S subunit in the 70S ribosome.

Its function is as follows. Located at the top of the head of the 30S subunit, it contacts several helices of the 16S rRNA. In the 70S ribosome it contacts the 23S rRNA (bridge B1a) and protein L5 of the 50S subunit (bridge B1b), connecting the 2 subunits; these bridges are implicated in subunit movement. Contacts the tRNAs in the A and P-sites. The chain is Small ribosomal subunit protein uS13 from Chlorobaculum tepidum (strain ATCC 49652 / DSM 12025 / NBRC 103806 / TLS) (Chlorobium tepidum).